Here is a 145-residue protein sequence, read N- to C-terminus: Transcription antitermination protein NusB (145 aa).

Belongs to the NusB family.

In terms of biological role, involved in transcription antitermination. Required for transcription of ribosomal RNA (rRNA) genes. Binds specifically to the boxA antiterminator sequence of the ribosomal RNA (rrn) operons. In Acetivibrio thermocellus (strain ATCC 27405 / DSM 1237 / JCM 9322 / NBRC 103400 / NCIMB 10682 / NRRL B-4536 / VPI 7372) (Clostridium thermocellum), this protein is Transcription antitermination protein NusB.